A 196-amino-acid polypeptide reads, in one-letter code: MKATLINYGVGNLFSIKAGLERVGFNVKISFLPEGDEDVIVLPGVGAFSAVSSYLNSMKDKFNELRERGVKFLGVCLGMQVMFDEGTEGGLSKGLGWFKGKVDKIHSNVKLPHIGWDKLFVNKDSCNLTEGLDGKYVYYVHSYVAYTNDYVAYSEYGIKYPAIVCNDFAVGTQFHPEKSSVTGKIFLRNFYSWVKR.

The region spanning 2–196 (KATLINYGVG…LRNFYSWVKR (195 aa)) is the Glutamine amidotransferase type-1 domain. Cys-76 serves as the catalytic Nucleophile. Catalysis depends on residues His-175 and Glu-177.

In terms of assembly, heterodimer of HisH and HisF.

Its subcellular location is the cytoplasm. It catalyses the reaction 5-[(5-phospho-1-deoxy-D-ribulos-1-ylimino)methylamino]-1-(5-phospho-beta-D-ribosyl)imidazole-4-carboxamide + L-glutamine = D-erythro-1-(imidazol-4-yl)glycerol 3-phosphate + 5-amino-1-(5-phospho-beta-D-ribosyl)imidazole-4-carboxamide + L-glutamate + H(+). The enzyme catalyses L-glutamine + H2O = L-glutamate + NH4(+). Its pathway is amino-acid biosynthesis; L-histidine biosynthesis; L-histidine from 5-phospho-alpha-D-ribose 1-diphosphate: step 5/9. In terms of biological role, IGPS catalyzes the conversion of PRFAR and glutamine to IGP, AICAR and glutamate. The HisH subunit catalyzes the hydrolysis of glutamine to glutamate and ammonia as part of the synthesis of IGP and AICAR. The resulting ammonia molecule is channeled to the active site of HisF. The sequence is that of Imidazole glycerol phosphate synthase subunit HisH from Sulfurisphaera tokodaii (strain DSM 16993 / JCM 10545 / NBRC 100140 / 7) (Sulfolobus tokodaii).